The sequence spans 402 residues: Zinc finger protein 809 (402 aa).

In terms of domain architecture, KRAB spans 4–75 (VSFEDVAVDF…AEASSRSLPG (72 aa)). The segment at 118-139 (QEVSKGTTSRHRRAPVKSLCRK) is disordered. Over residues 125–139 (TSRHRRAPVKSLCRK) the composition is skewed to basic residues. 7 C2H2-type zinc fingers span residues 155-178 (YECK…RRTH), 184-206 (YECD…QKTH), 213-235 (YECS…ERTH), 241-263 (YECT…KKTH), 269-291 (FKCE…QKKH), 297-319 (YECT…RIAH), and 325-347 (YECK…QKRH).

This sequence belongs to the krueppel C2H2-type zinc-finger protein family.

It is found in the nucleus. In terms of biological role, transcription factor specifically required to repress retrotransposons in embryonic stem cells. Recognizes and binds retroviral DNA sequences from a large subset of mammalian retroviruses and retroelements and repress their expression by recruiting a repressive complex containing TRIM28/KAP1. This chain is Zinc finger protein 809, found in Mus musculus (Mouse).